Consider the following 293-residue polypeptide: MANLKEIRAKVTSIQSTQKITRAMQMVAASKMRRAQERMEVGRPYADSMRRVISHLVHASSDYKHPYMVSRPVNRVGYIVITSDRGLAGGLNINLFKALSKNIQKYQEQSVQAEFAVIGAKGVSFFKSFGGKVTSAVTDYGDKPTFEQINAPVQAMLDDYTNGKIDRIYVVYNKFVNAMTQKPTVNQLVPLPESAFGEEESGIQTELSWDYIYEPDIKTLIDELLGRYIESIVYQAVMENIASEQSSRMVAMKAATDNAGDLINDLQLVYNKLRQAAITREISEIVGGAAAVS.

It belongs to the ATPase gamma chain family. As to quaternary structure, F-type ATPases have 2 components, CF(1) - the catalytic core - and CF(0) - the membrane proton channel. CF(1) has five subunits: alpha(3), beta(3), gamma(1), delta(1), epsilon(1). CF(0) has three main subunits: a, b and c.

The protein localises to the cell inner membrane. Produces ATP from ADP in the presence of a proton gradient across the membrane. The gamma chain is believed to be important in regulating ATPase activity and the flow of protons through the CF(0) complex. The chain is ATP synthase gamma chain from Psychrobacter cryohalolentis (strain ATCC BAA-1226 / DSM 17306 / VKM B-2378 / K5).